The primary structure comprises 593 residues: Aspartate--tRNA(Asp/Asn) ligase (593 aa).

Glutamate 173 provides a ligand contact to L-aspartate. Residues 197-200 form an aspartate region; that stretch reads QLFK. Arginine 219 contacts L-aspartate. ATP-binding positions include 219–221 and glutamine 228; that span reads RDE. Histidine 451 provides a ligand contact to L-aspartate. An ATP-binding site is contributed by glutamate 485. Residue arginine 492 coordinates L-aspartate. Residue 537 to 540 participates in ATP binding; it reads GIDR.

The protein belongs to the class-II aminoacyl-tRNA synthetase family. Type 1 subfamily. In terms of assembly, homodimer.

It localises to the cytoplasm. The catalysed reaction is tRNA(Asx) + L-aspartate + ATP = L-aspartyl-tRNA(Asx) + AMP + diphosphate. Its function is as follows. Aspartyl-tRNA synthetase with relaxed tRNA specificity since it is able to aspartylate not only its cognate tRNA(Asp) but also tRNA(Asn). Reaction proceeds in two steps: L-aspartate is first activated by ATP to form Asp-AMP and then transferred to the acceptor end of tRNA(Asp/Asn). The chain is Aspartate--tRNA(Asp/Asn) ligase from Legionella pneumophila (strain Paris).